The sequence spans 372 residues: 4-hydroxy-3-methylbut-2-en-1-yl diphosphate synthase (flavodoxin) (372 aa).

Residues Cys-270, Cys-273, Cys-305, and Glu-312 each contribute to the [4Fe-4S] cluster site.

It belongs to the IspG family. Requires [4Fe-4S] cluster as cofactor.

The enzyme catalyses (2E)-4-hydroxy-3-methylbut-2-enyl diphosphate + oxidized [flavodoxin] + H2O + 2 H(+) = 2-C-methyl-D-erythritol 2,4-cyclic diphosphate + reduced [flavodoxin]. The protein operates within isoprenoid biosynthesis; isopentenyl diphosphate biosynthesis via DXP pathway; isopentenyl diphosphate from 1-deoxy-D-xylulose 5-phosphate: step 5/6. Converts 2C-methyl-D-erythritol 2,4-cyclodiphosphate (ME-2,4cPP) into 1-hydroxy-2-methyl-2-(E)-butenyl 4-diphosphate. This chain is 4-hydroxy-3-methylbut-2-en-1-yl diphosphate synthase (flavodoxin), found in Idiomarina loihiensis (strain ATCC BAA-735 / DSM 15497 / L2-TR).